A 120-amino-acid chain; its full sequence is CLAVATA3/ESR (CLE)-related protein 9 (120 aa).

The signal sequence occupies residues 1-26; sequence MTMTHLNRLILISLLFVSLLLKSSTA. Residue Asn35 is glycosylated (N-linked (GlcNAc...) asparagine). The interval 85–120 is disordered; sequence RSSRKQPLLSPPPPEIDPRYGVDKRLVPSGPNPLHN. Residues 100 to 110 are compositionally biased toward basic and acidic residues; it reads IDPRYGVDKRL. A hydroxyproline mark is found at Pro112 and Pro115. Residue Pro115 is glycosylated (O-linked (Ara...) hydroxyproline).

This sequence belongs to the CLV3/ESR signal peptide family. Post-translationally, the O-glycosylation (arabinosylation) of the hydroxyproline Pro-115 enhances binding affinity of the CLE9p peptide for its receptor. Mostly expressed in leaves, flowers, stems and apex, and, to a lower extent, in seedlings, roots, siliques and pollen.

It is found in the secreted. The protein localises to the extracellular space. Functionally, extracellular signal peptide that regulates cell fate. Represses root apical meristem maintenance. Regulates the transition of protophloem cells from proliferation to differentiation, thus impinging on postembryonic growth capacity of the root meristem; this signaling pathway requires CRN and CLV2. The sequence is that of CLAVATA3/ESR (CLE)-related protein 9 from Arabidopsis thaliana (Mouse-ear cress).